Here is a 255-residue protein sequence, read N- to C-terminus: Small ribosomal subunit protein eS1 (255 aa).

Ala-2 carries the N-acetylalanine; partial modification.

This sequence belongs to the eukaryotic ribosomal protein eS1 family. Component of the small ribosomal subunit. Mature ribosomes consist of a small (40S) and a large (60S) subunit. The 40S subunit contains about 33 different proteins and 1 molecule of RNA (18S). The 60S subunit contains about 49 different proteins and 3 molecules of RNA (25S, 5.8S and 5S).

It is found in the cytoplasm. This chain is Small ribosomal subunit protein eS1 (rps1), found in Pyrenophora tritici-repentis (strain Pt-1C-BFP) (Wheat tan spot fungus).